Here is a 275-residue protein sequence, read N- to C-terminus: Vitamin B12-binding protein (275 aa).

A signal peptide spans 1-19 (MMNKLCFALPLIFSDASFA). Residues 25–272 (RIISLAPHST…EVCEHFETVR (248 aa)) form the Fe/B12 periplasmic-binding domain. A disulfide bridge links C185 with C265.

This sequence belongs to the BtuF family. In terms of assembly, the complex is composed of two ATP-binding proteins (BtuD), two transmembrane proteins (BtuC) and a solute-binding protein (BtuF).

The protein resides in the periplasm. Functionally, part of the ABC transporter complex BtuCDF involved in vitamin B12 import. Binds vitamin B12 and delivers it to the periplasmic surface of BtuC. The protein is Vitamin B12-binding protein of Vibrio campbellii (strain ATCC BAA-1116).